The primary structure comprises 339 residues: Ketol-acid reductoisomerase (NADP(+)) (339 aa).

A KARI N-terminal Rossmann domain is found at 1-182 (MRVYYDCDVN…GGGRSGIMKT (182 aa)). Residues 24–27 (YGAQ), Ser-51, Thr-53, and 83–86 (DELQ) each bind NADP(+). The active site involves His-108. Gly-134 is an NADP(+) binding site. One can recognise a KARI C-terminal knotted domain in the interval 183–328 (TFREECETDL…DKIRSMMALT (146 aa)). Asp-191, Glu-195, Glu-227, and Glu-231 together coordinate Mg(2+). Residue Ser-252 coordinates substrate.

Belongs to the ketol-acid reductoisomerase family. Mg(2+) is required as a cofactor.

It carries out the reaction (2R)-2,3-dihydroxy-3-methylbutanoate + NADP(+) = (2S)-2-acetolactate + NADPH + H(+). The enzyme catalyses (2R,3R)-2,3-dihydroxy-3-methylpentanoate + NADP(+) = (S)-2-ethyl-2-hydroxy-3-oxobutanoate + NADPH + H(+). It functions in the pathway amino-acid biosynthesis; L-isoleucine biosynthesis; L-isoleucine from 2-oxobutanoate: step 2/4. The protein operates within amino-acid biosynthesis; L-valine biosynthesis; L-valine from pyruvate: step 2/4. In terms of biological role, involved in the biosynthesis of branched-chain amino acids (BCAA). Catalyzes an alkyl-migration followed by a ketol-acid reduction of (S)-2-acetolactate (S2AL) to yield (R)-2,3-dihydroxy-isovalerate. In the isomerase reaction, S2AL is rearranged via a Mg-dependent methyl migration to produce 3-hydroxy-3-methyl-2-ketobutyrate (HMKB). In the reductase reaction, this 2-ketoacid undergoes a metal-dependent reduction by NADPH to yield (R)-2,3-dihydroxy-isovalerate. The protein is Ketol-acid reductoisomerase (NADP(+)) of Bartonella bacilliformis (strain ATCC 35685 / KC583 / Herrer 020/F12,63).